Consider the following 24-residue polypeptide: General odorant-binding protein (24 aa).

This sequence belongs to the PBP/GOBP family. As to quaternary structure, homodimer. In terms of tissue distribution, antenna.

In terms of biological role, present in the aqueous fluid surrounding olfactory sensory dendrites and are thought to aid in the capture and transport of hydrophobic odorants into and through this fluid. The sequence is that of General odorant-binding protein from Antheraea polyphemus (Polyphemus moth).